Here is a 333-residue protein sequence, read N- to C-terminus: MFQDISNFYKDKTILVTGGTGSIGKEIVKTLLKFNPKTIRVLDINETALFELEHELNSEKIRCFIGDVRDKDRLKRAIEEVDVVFHAAALKHVPLCEYNPFEAVKTNVIGTQNLIEVAMDEEVEKFITISTDKAVNPVNVMGATKLLAERLTISANLYKGKRKTAFSVVRFGNVLNSRGSILPLLKEQIKKGGPVTLTHPDMTRFIMSINEAVKLVLKACYLAKGGEIFILKMPSVRIKDLIEVVIEELAPKYGYKPEDIEIKIIGKRPGEKLYEELIIEEEIYNLEELEDMFVVYPYGVDGNKNNKIIYNSKDAKFLNKEKIKKILKEISYL.

Belongs to the polysaccharide synthase family.

This is an uncharacterized protein from Methanocaldococcus jannaschii (strain ATCC 43067 / DSM 2661 / JAL-1 / JCM 10045 / NBRC 100440) (Methanococcus jannaschii).